The sequence spans 212 residues: Large ribosomal subunit protein uL3 (212 aa).

Positions 129–156 (RRGPMGHGSKNHRAPGSTGAGTTPGRIY) are disordered. Over residues 142 to 153 (APGSTGAGTTPG) the composition is skewed to low complexity.

This sequence belongs to the universal ribosomal protein uL3 family. In terms of assembly, part of the 50S ribosomal subunit. Forms a cluster with proteins L14 and L19.

Functionally, one of the primary rRNA binding proteins, it binds directly near the 3'-end of the 23S rRNA, where it nucleates assembly of the 50S subunit. In Acaryochloris marina (strain MBIC 11017), this protein is Large ribosomal subunit protein uL3.